A 375-amino-acid chain; its full sequence is MDSPSSVSSYSSSSLSPSFSTSSVNSDFSFPSDNEREGKGTHELRPDTVGQRGGSRPSPGPIRCRHRPRVSSNQHTAPHLEQQGSEVKRSRDGEQETSLNTQGCTTEGDLLFAQKCKELQGFIRPLTDLLNGLKMGRFDRGLSSFQQSVAMDRIQRIVGVLQKPQMGERYLGTLLQVEGMLKTWFPHIAAQKSSSGGSRHQISKHFPSHHGDPGAASPAPLLEKMGQTQLGHLVLKPKQPWHLTGWPAMNLTWIHSTPICNPPLSSQGSASGHSPIGTGASIGVILVLQKGGQPFTHSAPGTPVPPTPLSPVVPGDLKKLPGEEPRCHSLPVTLPSDWSCILCPPVLPTTDREMTKGHPEPQMTSHPPVAPDPQP.

A compositionally biased stretch (low complexity) spans 1–32 (MDSPSSVSSYSSSSLSPSFSTSSVNSDFSFPS). Disordered stretches follow at residues 1–102 (MDSP…LNTQ), 192–218 (KSSSGGSRHQISKHFPSHHGDPGAASP), and 351–375 (DREMTKGHPEPQMTSHPPVAPDPQP). The segment covering 33-46 (DNEREGKGTHELRP) has biased composition (basic and acidic residues).

As to quaternary structure, interacts with BMAL1, PER2, CRY2, BHLHE41, HDAC1 NR3C1.

Its subcellular location is the nucleus. It localises to the PML body. Functionally, transcriptional repressor which forms a negative regulatory component of the circadian clock and acts independently of the circadian transcriptional repressors: CRY1, CRY2 and BHLHE41. In a histone deacetylase-dependent manner represses the transcriptional activator activity of the CLOCK-BMAL1 heterodimer. Abrogates the interaction of BMAL1 with the transcriptional coactivator CREBBP and can repress the histone acetyl-transferase activity of the CLOCK-BMAL1 heterodimer, reducing histone acetylation of its target genes. Rhythmically binds the E-box elements (5'-CACGTG-3') on circadian gene promoters and its occupancy shows circadian oscillation antiphasic to BMAL1. Interacts with the glucocorticoid receptor (NR3C1) and contributes to the repressive function in the glucocorticoid response. The chain is Circadian-associated transcriptional repressor (Ciart) from Mus musculus (Mouse).